A 762-amino-acid chain; its full sequence is Phosphoribosylformylglycinamidine synthase subunit PurL (762 aa).

Residue His-58 is part of the active site. Residues Tyr-61 and Arg-105 each coordinate ATP. Position 107 (Glu-107) interacts with Mg(2+). Substrate-binding positions include 108-111 (SHNH) and Arg-130. His-109 (proton acceptor) is an active-site residue. Residue Asp-131 coordinates Mg(2+). Gln-255 contacts substrate. Asp-283 is a binding site for Mg(2+). Residue 327-329 (ESQ) participates in substrate binding. Residues Asn-513 and Gly-550 each contribute to the ATP site. Residue Asn-551 coordinates Mg(2+). Position 553 (Ser-553) interacts with substrate.

This sequence belongs to the FGAMS family. As to quaternary structure, monomer. Part of the FGAM synthase complex composed of 1 PurL, 1 PurQ and 2 PurS subunits.

The protein resides in the cytoplasm. It carries out the reaction N(2)-formyl-N(1)-(5-phospho-beta-D-ribosyl)glycinamide + L-glutamine + ATP + H2O = 2-formamido-N(1)-(5-O-phospho-beta-D-ribosyl)acetamidine + L-glutamate + ADP + phosphate + H(+). It functions in the pathway purine metabolism; IMP biosynthesis via de novo pathway; 5-amino-1-(5-phospho-D-ribosyl)imidazole from N(2)-formyl-N(1)-(5-phospho-D-ribosyl)glycinamide: step 1/2. Functionally, part of the phosphoribosylformylglycinamidine synthase complex involved in the purines biosynthetic pathway. Catalyzes the ATP-dependent conversion of formylglycinamide ribonucleotide (FGAR) and glutamine to yield formylglycinamidine ribonucleotide (FGAM) and glutamate. The FGAM synthase complex is composed of three subunits. PurQ produces an ammonia molecule by converting glutamine to glutamate. PurL transfers the ammonia molecule to FGAR to form FGAM in an ATP-dependent manner. PurS interacts with PurQ and PurL and is thought to assist in the transfer of the ammonia molecule from PurQ to PurL. This Corynebacterium glutamicum (strain R) protein is Phosphoribosylformylglycinamidine synthase subunit PurL.